The sequence spans 428 residues: D-amino acid dehydrogenase (428 aa).

An FAD-binding site is contributed by 3 to 17; sequence VVVLGSGVVGVTSAY.

Belongs to the DadA oxidoreductase family. FAD serves as cofactor.

The catalysed reaction is a D-alpha-amino acid + A + H2O = a 2-oxocarboxylate + AH2 + NH4(+). The protein operates within amino-acid degradation; D-alanine degradation; NH(3) and pyruvate from D-alanine: step 1/1. Oxidative deamination of D-amino acids. The protein is D-amino acid dehydrogenase of Paraburkholderia phytofirmans (strain DSM 17436 / LMG 22146 / PsJN) (Burkholderia phytofirmans).